The chain runs to 471 residues: Ubiquitin carboxyl-terminal hydrolase 8 (471 aa).

Positions 4, 6, 46, 49, 60, 63, 68, 73, 77, 83, 96, and 99 each coordinate Zn(2+). The UBP-type; degenerate zinc finger occupies 22 to 122; that stretch reads KTCNAARYIL…ILAKYWDDVC (101 aa). The USP domain maps to 137-468; it reads SGLINMGSTC…QAYLLFYTIR (332 aa). The Nucleophile role is filled by Cys-146. Zn(2+) is bound by residues His-170, Cys-174, Cys-182, Cys-185, His-250, Cys-271, Cys-273, His-276, Cys-289, Cys-292, Cys-336, and Cys-339. The active-site Proton acceptor is His-427.

It belongs to the peptidase C19 family. UBP8 subfamily. Component of the 1.8 MDa SAGA (Spt-Ada-Gcn5 acetyltransferase) complex, which is composed of 19 subunits TRA1, SPT7, TAF5, NGG1/ADA3, SGF73, SPT20/ADA5, SPT8, TAF12, TAF6, HFI1/ADA1, UBP8, GCN5, ADA2, SPT3, SGF29, TAF10, TAF9, SGF11 and SUS1. The SAGA complex is composed of 4 modules, namely the HAT (histone acetyltransferase) module (GCN5, ADA2, NGG1/ADA3 and SGF29), the DUB (deubiquitinating) module (UBP8, SGF11, SGF73 and SUS1), the core or TAF (TBP-associated factor) module (TAF5, TAF6, TAF9, TAF10 and TAF12), and the Tra1 or SPT (Suppressor of Ty) module (TRA1, HFI1/ADA1, SPT3, SPT7, SPT8 and SPT20/ADA5). The Tra1/SPT module binds activators, the core module recruits TBP (TATA-binding protein), the HAT module contains the histone H3 acetyltransferase GCN5, and the DUB module comprises the histone H2B deubiquitinase UBP8. Also identified in an altered form of SAGA, named SALSA (SAGA altered, Spt8 absent) or SLIK (SAGA-like) complex, which contains a C-terminal truncated form of SPT7 and is missing SPT8. However, it has been shown that the SAGA and SAGA-like SALSA/SLIK transcriptional coactivators are structurally and biochemically equivalent.

It is found in the nucleus. It carries out the reaction Thiol-dependent hydrolysis of ester, thioester, amide, peptide and isopeptide bonds formed by the C-terminal Gly of ubiquitin (a 76-residue protein attached to proteins as an intracellular targeting signal).. In terms of biological role, histone deubiquitinating enzyme component of the transcription coactivator SAGA complex. SAGA acts as a general cofactor required for essentially all RNA polymerase II transcription. At the promoters, SAGA is required for transcription pre-initiation complex (PIC) recruitment. It influences RNA polymerase II transcriptional activity through different activities such as TBP interaction (via core/TAF module) and promoter selectivity, interaction with transcription activators (via Tra1/SPT module), and chromatin modification through histone acetylation (via HAT module) and deubiquitination (via DUB module). SAGA preferentially acetylates histones H3 (to form H3K9ac, H3K14ac, H3K18ac and H3K23ac) and H2B and deubiquitinates histone H2B. SAGA interacts with DNA via upstream activating sequences (UASs). Also identified in a modified version of SAGA named SALSA or SLIK. The cleavage of SPT7 and the absence of the SPT8 subunit in SLIK neither drive any major conformational differences in its structure compared with SAGA, nor significantly affect HAT, DUB, or DNA-binding activities. Within the DUB module, the correctly positioned zinc finger domains of SGF11 and SGF73 are both required to fully activate the ubiquitin hydrolase UBP8. The DUB module is also linked to the splicing efficiency of many transcripts. This chain is Ubiquitin carboxyl-terminal hydrolase 8 (UBP8), found in Saccharomyces cerevisiae (strain ATCC 204508 / S288c) (Baker's yeast).